The sequence spans 308 residues: MEILLIFLLALVIDMVFGDPPNAFHPVAYMGKVISLFERAGFKGGKGYQFVYGIVMVIFTMALFFVPVYFLLDWLQGINSIVYIIVSAILFKMCFTVTGLRKAALLIKRLLEKDDIAQARFELRSLVSRDTSKLPQPKLVAAAVESVAESIGDGFVAPLFFFLIFGVPGVMAYRVVSTFDSMVGYRGKYEYLGKFAARFDDVLNFIPARLSALCILVASFFGRYSPAGAWRIMWRDHGKTQSPNAGWPMATAAGALEVCLEKVGHYSLGDDIRPLLPQTISCSLVLINNAGCIWVLISVGVIYFARIA.

6 helical membrane-spanning segments follow: residues 1 to 21 (MEIL…GDPP), 50 to 70 (FVYG…PVYF), 71 to 91 (LLDW…AILF), 151 to 171 (IGDG…PGVM), 202 to 222 (VLNF…SFFG), and 284 to 304 (LVLI…VIYF).

The protein belongs to the CobD/CbiB family.

It localises to the cell membrane. The protein operates within cofactor biosynthesis; adenosylcobalamin biosynthesis. Its function is as follows. Converts cobyric acid to cobinamide by the addition of aminopropanol on the F carboxylic group. This chain is Cobalamin biosynthesis protein CobD, found in Dehalococcoides mccartyi (strain CBDB1).